We begin with the raw amino-acid sequence, 125 residues long: Ribonuclease P protein component (125 aa).

It belongs to the RnpA family. As to quaternary structure, consists of a catalytic RNA component (M1 or rnpB) and a protein subunit.

The catalysed reaction is Endonucleolytic cleavage of RNA, removing 5'-extranucleotides from tRNA precursor.. Functionally, RNaseP catalyzes the removal of the 5'-leader sequence from pre-tRNA to produce the mature 5'-terminus. It can also cleave other RNA substrates such as 4.5S RNA. The protein component plays an auxiliary but essential role in vivo by binding to the 5'-leader sequence and broadening the substrate specificity of the ribozyme. The protein is Ribonuclease P protein component of Ruegeria pomeroyi (strain ATCC 700808 / DSM 15171 / DSS-3) (Silicibacter pomeroyi).